Reading from the N-terminus, the 266-residue chain is Undecaprenyl-diphosphatase (266 aa).

A run of 8 helical transmembrane segments spans residues 1-21, 43-63, 81-101, 109-129, 159-179, 183-203, 219-239, and 246-266; these read MVVILAIVEGITEFLPISSTG, FLIIIQLGAIFSVVVYFWKDI, LKIIVGVLPAMVIGLLLDDII, VLIVAITLIAYGVIFIGIEVV, LAMIPGTSRSGATIIGALLLG, PLAAEFSFYLAIPTMFGATAL, YLALGSAIAFVVAYIVIKWFM, and SFASFGLYRIILGIIVIVLLY.

The protein belongs to the UppP family.

The protein resides in the cell inner membrane. The catalysed reaction is di-trans,octa-cis-undecaprenyl diphosphate + H2O = di-trans,octa-cis-undecaprenyl phosphate + phosphate + H(+). Catalyzes the dephosphorylation of undecaprenyl diphosphate (UPP). Confers resistance to bacitracin. The chain is Undecaprenyl-diphosphatase from Fusobacterium nucleatum subsp. nucleatum (strain ATCC 25586 / DSM 15643 / BCRC 10681 / CIP 101130 / JCM 8532 / KCTC 2640 / LMG 13131 / VPI 4355).